Here is a 786-residue protein sequence, read N- to C-terminus: uncharacterized protein (786 aa).

W361–D362 serves as a coordination point for substrate. The Proton donor role is filled by E488. K590 to Q591 is a binding site for substrate. A disordered region spans residues T762–R786. Residues L766 to R776 show a composition bias toward pro residues.

The protein belongs to the glycosyl hydrolase 65 family.

This is an uncharacterized protein from Mycobacterium tuberculosis (strain CDC 1551 / Oshkosh).